The primary structure comprises 999 residues: Probable hemoglobin and hemoglobin-haptoglobin-binding protein 4 (999 aa).

Positions 1–24 (MTNFRLNVLAYSVMLGLTASVAYA) are cleaved as a signal peptide. Residues 25 to 52 (EPTNQPTNQPTNQPTNQPTNQPTNQNSN) are disordered. Repeat copies occupy residues 26–29 (PTNQ), 30–33 (PTNQ), 34–37 (PTNQ), 38–41 (PTNQ), 42–45 (PTNQ), and 46–49 (PTNQ). The segment at 26 to 49 (PTNQPTNQPTNQPTNQPTNQPTNQ) is 6 X 4 AA tandem repeats of P-T-N-Q. The span at 26–50 (PTNQPTNQPTNQPTNQPTNQPTNQN) shows a compositional bias: low complexity. The short motif at 58 to 65 (EQINVLGS) is the TonB box element. The TBDR plug domain maps to 68-195 (NNDNTPPKIA…LGGAVLFETK (128 aa)). The TBDR beta-barrel domain occupies 203–999 (EKDWHIGYKA…NYKLSAEITF (797 aa)). Positions 982–999 (NRFYSPGRNYKLSAEITF) match the TonB C-terminal box motif.

It belongs to the TonB-dependent receptor family. Hemoglobin/haptoglobin binding protein subfamily.

The protein localises to the cell outer membrane. Functionally, acts as a receptor for hemoglobin or the hemoglobin/haptoglobin complex of the human host and is required for heme uptake. This chain is Probable hemoglobin and hemoglobin-haptoglobin-binding protein 4, found in Haemophilus influenzae (strain ATCC 51907 / DSM 11121 / KW20 / Rd).